The chain runs to 217 residues: Nucleoside diphosphate kinase homolog 5 (217 aa).

Positions 18-151 (ERTLALIKPD…REIRFMFPHS (134 aa)) are NDK.

It belongs to the NDK family.

The protein localises to the cell projection. It is found in the cilium. Functionally, functions as part of axonemal radial spoke complexes that play an important part in the motility of sperm and cilia. Does not seem to have nucleoside diphosphate kinase (NDPK) activity. Exhibits a 3'-5' exonuclease activity with a preference for single-stranded DNA, suggesting roles in DNA proofreading and repair. In Danio rerio (Zebrafish), this protein is Nucleoside diphosphate kinase homolog 5 (nme5).